A 395-amino-acid chain; its full sequence is Protein hedgehog (395 aa).

The first 26 residues, 1 to 26 (MDNHSSVPWASAASVTCLSLDAKCHS), serve as a signal peptide directing secretion. A compositionally biased stretch (low complexity) spans 26-43 (SSSSSCSSKSTASSISAS). The interval 26–46 (SSSSSCSSKSTASSISASPET) is disordered. A propeptide spanning residues 27–82 (SSSSCSSKSTASSISASPETQTMRHIAHTQRCLSRLTSLVALLLIVLPMMFSPAHS) is cleaved from the precursor. Cys-83 carries N-palmitoyl cysteine lipidation. 7 residues coordinate Ca(2+): Glu-147, Glu-148, Asp-153, Thr-183, Glu-184, Asp-187, and Asp-189. Gly-255 carries the Cholesterol glycine ester lipid modification.

Belongs to the hedgehog family. As to quaternary structure, interacts with shf. The C-terminal part of the hedgehog protein precursor displays an autoproteolysis activity that results in the cleavage of the full-length protein into two parts (N-product and C-product). In addition, the C-terminal part displays a cholesterol transferase activity that results by the covalent attachment of a cholesterol moiety to the C-terminal of the newly generated N-product. The N-product is the active species in both local and long-range signaling, whereas the C-product has no signaling activity. Post-translationally, cholesterylation is required for N-product targeting to lipid rafts and multimerization. In terms of processing, N-palmitoylation by Rasp of the hedgehog N-product, within the secretory pathway, is required for the embryonic and larval patterning activities of the hedgehog signal.

Its subcellular location is the nucleus. It localises to the cytoplasm. The protein localises to the cell membrane. It carries out the reaction glycyl-L-cysteinyl-[protein] + cholesterol + H(+) = [protein]-C-terminal glycyl cholesterol ester + N-terminal L-cysteinyl-[protein]. Functionally, the C-terminal part of the hedgehog protein precursor displays an autoproteolysis activity that results in the cleavage of the full-length protein into two parts (N-product and C-product). In addition, the C-terminal part displays a cholesterol transferase activity that results by the covalent attachment of a cholesterol moiety to the C-terminal of the newly generated N-product. Once cleaved, the C-product has no signaling activity and diffuses from the cell. The dually lipidated hedgehog protein N-product is a morphogen which is essential for a variety of patterning events during development. Establishes the anterior-posterior axis of the embryonic segments and patterns the larval imaginal disks. Binds to the patched (ptc) receptor, which functions in association with smoothened (smo), to activate the transcription of target genes wingless (wg), decapentaplegic (dpp) and ptc. In the absence of hh, ptc represses the constitutive signaling activity of smo through fused (fu). Essential component of a signaling pathway which regulates the Duox-dependent gut immune response to bacterial uracil; required to activate Cad99C-dependent endosome formation, norpA-dependent Ca2+ mobilization and p38 MAPK, which are essential steps in the Duox-dependent production of reactive oxygen species (ROS) in response to intestinal bacterial infection. During photoreceptor differentiation, it up-regulates transcription of Ubr3, which in turn promotes the hh-signaling pathway by mediating the ubiquitination and degradation of cos. The polypeptide is Protein hedgehog (Drosophila simulans (Fruit fly)).